A 510-amino-acid chain; its full sequence is Probable cytochrome P450 312a1 (510 aa).

Cys455 contributes to the heme binding site.

The protein belongs to the cytochrome P450 family. Heme serves as cofactor.

It localises to the endoplasmic reticulum membrane. Its subcellular location is the microsome membrane. May be involved in the metabolism of insect hormones and in the breakdown of synthetic insecticides. This chain is Probable cytochrome P450 312a1 (Cyp312a1), found in Drosophila melanogaster (Fruit fly).